Here is a 378-residue protein sequence, read N- to C-terminus: D-alanine--D-alanine ligase (378 aa).

In terms of domain architecture, ATP-grasp spans 140-346 (KKIISQAGIR…YSDLIDRLIQ (207 aa)). An ATP-binding site is contributed by 170–225 (EEKLGNLTFVKPAKQGSSVGIHRVTNAEEYEKALDDAFKYDYKILVEQGIANPQEI). Positions 300, 313, and 315 each coordinate Mg(2+).

This sequence belongs to the D-alanine--D-alanine ligase family. The cofactor is Mg(2+). It depends on Mn(2+) as a cofactor.

The protein resides in the cytoplasm. It carries out the reaction 2 D-alanine + ATP = D-alanyl-D-alanine + ADP + phosphate + H(+). It functions in the pathway cell wall biogenesis; peptidoglycan biosynthesis. Cell wall formation. The protein is D-alanine--D-alanine ligase of Limosilactobacillus reuteri (strain DSM 20016) (Lactobacillus reuteri).